The primary structure comprises 194 residues: MPRLILASTSPWRRALLEKLTIPFECAAPDVDETPMPGEAPRQLVLRLAQAKAQSLAARFPNHLIIGSDQICVLDGEITGKPLTEEKARQQLAKASGNIVTFYTGLALYNSASGHLQTEVEPFDVHFRHLSEAEIDDYVRKEHPLHCAGSFKSEGLGIALFERLEGRDPNTLIGLPLIALCQMLRREEMNPLNA.

Catalysis depends on Asp-69, which acts as the Proton acceptor.

It belongs to the Maf family. YceF subfamily. Requires a divalent metal cation as cofactor.

The protein localises to the cytoplasm. The enzyme catalyses N(7)-methyl-GTP + H2O = N(7)-methyl-GMP + diphosphate + H(+). In terms of biological role, nucleoside triphosphate pyrophosphatase that hydrolyzes 7-methyl-GTP (m(7)GTP). May have a dual role in cell division arrest and in preventing the incorporation of modified nucleotides into cellular nucleic acids. This is 7-methyl-GTP pyrophosphatase (yceF1) from Salmonella paratyphi A (strain ATCC 9150 / SARB42).